Consider the following 239-residue polypeptide: Protein G1-like8 (239 aa).

Disordered regions lie at residues 1–35 and 149–239; these read MEGG…RYES and KARG…ATRV. Over residues 9 to 29 the composition is skewed to low complexity; that stretch reads DAQAQAQPVAQAPPAMQPMQQ. The 128-residue stretch at 32–159 folds into the ALOG domain; sequence RYESQKRRDW…ARGIPYEKKK (128 aa). Positions 157–161 match the Nuclear localization signal motif; sequence KKKRK. Pro residues predominate over residues 167 to 178; it reads QPPPQPPLPPQH. Composition is skewed to low complexity over residues 179-215 and 223-239; these read QPGA…ATSQ and TTTT…ATRV.

Belongs to the plant homeotic and developmental regulators ALOG protein family.

It localises to the nucleus. In terms of biological role, probable transcription regulator that acts as a developmental regulator by promoting cell growth in response to light. This chain is Protein G1-like8, found in Oryza sativa subsp. indica (Rice).